The following is a 146-amino-acid chain: Ribosomal RNA large subunit methyltransferase H (146 aa).

S-adenosyl-L-methionine is bound by residues Leu60, Gly93, and 112–117 (MGKMTL).

It belongs to the RNA methyltransferase RlmH family. In terms of assembly, homodimer.

The protein localises to the cytoplasm. It catalyses the reaction pseudouridine(1915) in 23S rRNA + S-adenosyl-L-methionine = N(3)-methylpseudouridine(1915) in 23S rRNA + S-adenosyl-L-homocysteine + H(+). Its function is as follows. Specifically methylates the pseudouridine at position 1915 (m3Psi1915) in 23S rRNA. The chain is Ribosomal RNA large subunit methyltransferase H from Koribacter versatilis (strain Ellin345).